A 272-amino-acid chain; its full sequence is Bifunctional protein FolD (272 aa).

Residues 155-157 (GRS), Ser-182, and Ile-223 each bind NADP(+).

Belongs to the tetrahydrofolate dehydrogenase/cyclohydrolase family. As to quaternary structure, homodimer.

The enzyme catalyses (6R)-5,10-methylene-5,6,7,8-tetrahydrofolate + NADP(+) = (6R)-5,10-methenyltetrahydrofolate + NADPH. The catalysed reaction is (6R)-5,10-methenyltetrahydrofolate + H2O = (6R)-10-formyltetrahydrofolate + H(+). The protein operates within one-carbon metabolism; tetrahydrofolate interconversion. Functionally, catalyzes the oxidation of 5,10-methylenetetrahydrofolate to 5,10-methenyltetrahydrofolate and then the hydrolysis of 5,10-methenyltetrahydrofolate to 10-formyltetrahydrofolate. The polypeptide is Bifunctional protein FolD (Fervidobacterium nodosum (strain ATCC 35602 / DSM 5306 / Rt17-B1)).